Here is a 472-residue protein sequence, read N- to C-terminus: UDP-N-acetylmuramate--L-alanine ligase (472 aa).

123-129 is an ATP binding site; the sequence is GSHGKTT.

The protein belongs to the MurCDEF family.

The protein localises to the cytoplasm. The enzyme catalyses UDP-N-acetyl-alpha-D-muramate + L-alanine + ATP = UDP-N-acetyl-alpha-D-muramoyl-L-alanine + ADP + phosphate + H(+). It functions in the pathway cell wall biogenesis; peptidoglycan biosynthesis. Cell wall formation. The polypeptide is UDP-N-acetylmuramate--L-alanine ligase (Solibacter usitatus (strain Ellin6076)).